A 1027-amino-acid chain; its full sequence is Error-prone DNA polymerase (1027 aa).

This sequence belongs to the DNA polymerase type-C family. DnaE2 subfamily.

It is found in the cytoplasm. The enzyme catalyses DNA(n) + a 2'-deoxyribonucleoside 5'-triphosphate = DNA(n+1) + diphosphate. DNA polymerase involved in damage-induced mutagenesis and translesion synthesis (TLS). It is not the major replicative DNA polymerase. The protein is Error-prone DNA polymerase of Dechloromonas aromatica (strain RCB).